The chain runs to 305 residues: tRNA dimethylallyltransferase (305 aa).

Residue 11-18 (GPTAVGKT) coordinates ATP. 13–18 (TAVGKT) lines the substrate pocket. The interaction with substrate tRNA stretch occupies residues 36–39 (DSMQ).

The protein belongs to the IPP transferase family. In terms of assembly, monomer. The cofactor is Mg(2+).

It carries out the reaction adenosine(37) in tRNA + dimethylallyl diphosphate = N(6)-dimethylallyladenosine(37) in tRNA + diphosphate. In terms of biological role, catalyzes the transfer of a dimethylallyl group onto the adenine at position 37 in tRNAs that read codons beginning with uridine, leading to the formation of N6-(dimethylallyl)adenosine (i(6)A). This Listeria monocytogenes serotype 4a (strain HCC23) protein is tRNA dimethylallyltransferase.